We begin with the raw amino-acid sequence, 443 residues long: 3-isopropylmalate dehydratase large subunit (443 aa).

[4Fe-4S] cluster is bound by residues Cys347, Cys407, and Cys410.

Belongs to the aconitase/IPM isomerase family. LeuC type 1 subfamily. Heterodimer of LeuC and LeuD. It depends on [4Fe-4S] cluster as a cofactor.

It carries out the reaction (2R,3S)-3-isopropylmalate = (2S)-2-isopropylmalate. It participates in amino-acid biosynthesis; L-leucine biosynthesis; L-leucine from 3-methyl-2-oxobutanoate: step 2/4. Catalyzes the isomerization between 2-isopropylmalate and 3-isopropylmalate, via the formation of 2-isopropylmaleate. This Buchnera aphidicola subsp. Uroleucon aeneum protein is 3-isopropylmalate dehydratase large subunit.